We begin with the raw amino-acid sequence, 221 residues long: Pyridoxine/pyridoxamine 5'-phosphate oxidase (221 aa).

The tract at residues 1-21 (MDYSDPAELRESYDGAPLDPR) is disordered. Substrate contacts are provided by residues 10-13 (RESY) and Lys68. FMN is bound by residues 63 to 68 (RTVLLK), 78 to 79 (FT), Arg84, Lys85, and Gln107. Tyr125, Arg129, and Ser133 together coordinate substrate. Residues 143 to 144 (QS) and Trp189 each bind FMN. 195 to 197 (RMH) contributes to the substrate binding site. FMN is bound at residue Arg199.

Belongs to the pyridoxamine 5'-phosphate oxidase family. As to quaternary structure, homodimer. Requires FMN as cofactor.

It carries out the reaction pyridoxamine 5'-phosphate + O2 + H2O = pyridoxal 5'-phosphate + H2O2 + NH4(+). It catalyses the reaction pyridoxine 5'-phosphate + O2 = pyridoxal 5'-phosphate + H2O2. It functions in the pathway cofactor metabolism; pyridoxal 5'-phosphate salvage; pyridoxal 5'-phosphate from pyridoxamine 5'-phosphate: step 1/1. Its pathway is cofactor metabolism; pyridoxal 5'-phosphate salvage; pyridoxal 5'-phosphate from pyridoxine 5'-phosphate: step 1/1. Functionally, catalyzes the oxidation of either pyridoxine 5'-phosphate (PNP) or pyridoxamine 5'-phosphate (PMP) into pyridoxal 5'-phosphate (PLP). The sequence is that of Pyridoxine/pyridoxamine 5'-phosphate oxidase from Thermobifida fusca (strain YX).